A 496-amino-acid chain; its full sequence is Cytochrome P450 71D181 (496 aa).

The helical; Signal-anchor for type II membrane protein transmembrane segment at 1–21 (MDISISWVAIILVISSYFIFM) threads the bilayer. Cys435 is a heme binding site. The segment at 471-496 (MSETPGLSGPRKNPLIMVPTIHNPTS) is disordered.

It belongs to the cytochrome P450 family. Heme serves as cofactor. As to expression, expressed at low levels in flowers, leaves and stems.

It is found in the membrane. The catalysed reaction is alpha-terpinene + 2 reduced [NADPH--hemoprotein reductase] + 2 O2 = carvacrol + 2 oxidized [NADPH--hemoprotein reductase] + 3 H2O + 2 H(+). The enzyme catalyses gamma-terpinene + 2 reduced [NADPH--hemoprotein reductase] + 2 O2 = carvacrol + 2 oxidized [NADPH--hemoprotein reductase] + 3 H2O + 2 H(+). It carries out the reaction (4S)-limonene + reduced [NADPH--hemoprotein reductase] + O2 = (1S,5R)-carveol + oxidized [NADPH--hemoprotein reductase] + H2O + H(+). It catalyses the reaction (4R)-limonene + reduced [NADPH--hemoprotein reductase] + O2 = (1R,5S)-carveol + oxidized [NADPH--hemoprotein reductase] + H2O + H(+). Its pathway is secondary metabolite biosynthesis; terpenoid biosynthesis. Its function is as follows. Involved in the biosynthesis of phenolic monoterpenes natural products thymol and carvacrol which have a broad range of biological activities acting as antimicrobial compounds, insecticides, antioxidants and pharmaceutical agents. Catalyzes the C2-hydroxylation of gamma-terpinene and alpha-terpinene to produce carvacrol. Also mediates the C6-hydroxylation of (4S)-limonene and (4R)-limonene to form carveol. The sequence is that of Cytochrome P450 71D181 from Origanum vulgare (Wild marjoram).